Reading from the N-terminus, the 384-residue chain is Probable protein phosphatase 2C 48 (384 aa).

The PPM-type phosphatase domain maps to 47-358 (ITGEFSMAVV…DDITVIVVFL (312 aa)). S78 carries the post-translational modification Phosphoserine. D89, G90, D290, and D349 together coordinate Mn(2+).

It belongs to the PP2C family. Requires Mg(2+) as cofactor. Mn(2+) serves as cofactor.

The catalysed reaction is O-phospho-L-seryl-[protein] + H2O = L-seryl-[protein] + phosphate. It catalyses the reaction O-phospho-L-threonyl-[protein] + H2O = L-threonyl-[protein] + phosphate. Functionally, may dephosphorylate and repress plasma membrane H(+)-ATPases (PM H(+)-ATPases, e.g. AHA1 and AHA2), thus influencing negatively plant growth and fitness. This chain is Probable protein phosphatase 2C 48, found in Arabidopsis thaliana (Mouse-ear cress).